The primary structure comprises 292 residues: Retinal homeobox protein Rx3 (292 aa).

Residues 1-27 (MRLVGSQYKDMEDRLSPSARLVRSPGS) are disordered. The Octapeptide motif motif lies at 32 to 39 (HSIESILG). Disordered regions lie at residues 53 to 72 (GSGKTGKDTEHLSPKKDSNK) and 85 to 107 (SPDLPDADGGKLSDDENPKKKHR). 2 stretches are compositionally biased toward basic and acidic residues: residues 57-72 (TGKDTEHLSPKKDSNK) and 92-102 (DGGKLSDDENP). Residues 106 to 165 (HRRNRTTFTTFQLHELERAFEKSHYPDVYSREELALKVNLPEVRVQVWFQNRRAKWRRQE) constitute a DNA-binding region (homeobox). The OAR signature appears at 272–285 (TSIASLRMKAKEHI). The short motif at 278 to 282 (RMKAK) is the Nuclear localization signal element.

The protein belongs to the paired homeobox family. Bicoid subfamily.

The protein localises to the nucleus. Plays a critical role in eye formation by regulating the initial specification of retinal cells and/or their subsequent proliferation. This Danio rerio (Zebrafish) protein is Retinal homeobox protein Rx3 (rx3).